The following is a 203-amino-acid chain: MSTLSPIYSRCATQGNSCPVSTIPEAMAYADPNGTGTIYYRNSEANKAFTCNNASFGNQTNSTAYQCYNGNLPTDFRTAGSSFYENGIPKGWTKCSDENETCDPKVNSDVDILFGADGSYVYSSAKSVPCNINIFGDPKQGVKKACYWRSPLIPINHTPSTPVTPTTPSGTQTTGHKWWVYLLLFGIPLLILIFLIIFFIAKK.

Residues 180-200 form a helical membrane-spanning segment; sequence VYLLLFGIPLLILIFLIIFFI.

It localises to the virion. The protein resides in the host membrane. This is an uncharacterized protein from Acanthamoeba polyphaga (Amoeba).